The following is a 284-amino-acid chain: Bifunctional protein FolD (284 aa).

NADP(+) is bound by residues 166–168, S191, and I232; that span reads GAS.

The protein belongs to the tetrahydrofolate dehydrogenase/cyclohydrolase family. As to quaternary structure, homodimer.

It carries out the reaction (6R)-5,10-methylene-5,6,7,8-tetrahydrofolate + NADP(+) = (6R)-5,10-methenyltetrahydrofolate + NADPH. It catalyses the reaction (6R)-5,10-methenyltetrahydrofolate + H2O = (6R)-10-formyltetrahydrofolate + H(+). The protein operates within one-carbon metabolism; tetrahydrofolate interconversion. Its function is as follows. Catalyzes the oxidation of 5,10-methylenetetrahydrofolate to 5,10-methenyltetrahydrofolate and then the hydrolysis of 5,10-methenyltetrahydrofolate to 10-formyltetrahydrofolate. The polypeptide is Bifunctional protein FolD (Neisseria gonorrhoeae (strain ATCC 700825 / FA 1090)).